A 548-amino-acid polypeptide reads, in one-letter code: Probable malate:quinone oxidoreductase (548 aa).

A disordered region spans residues 520 to 548 (YDRPQAADSTPKPQLKPQPVQKEVADIAL). The span at 530 to 541 (PKPQLKPQPVQK) shows a compositional bias: low complexity.

The protein belongs to the MQO family. Requires FAD as cofactor.

It catalyses the reaction (S)-malate + a quinone = a quinol + oxaloacetate. It functions in the pathway carbohydrate metabolism; tricarboxylic acid cycle; oxaloacetate from (S)-malate (quinone route): step 1/1. This Shigella dysenteriae serotype 1 (strain Sd197) protein is Probable malate:quinone oxidoreductase.